Here is a 244-residue protein sequence, read N- to C-terminus: Glutathione S-transferase theta-2 (244 aa).

Residues 2-82 enclose the GST N-terminal domain; sequence GLELYLDLLS…YLSSKYQVAD (81 aa). Glutathione is bound by residues 40–41, 53–54, 66–67, and 104–107; these read HL, KV, ES, and DNIR. Residues 88 to 230 form the GST C-terminal domain; it reads DLQARAQVHE…AKKTLPVPPP (143 aa).

The protein belongs to the GST superfamily. Theta family. Homodimer. In terms of tissue distribution, highest values found in liver followed by testis, adrenal gland, kidney, lung, brain and skeletal muscle. In liver, highest expression found in central vein limiting plate hepatocytes. In lung, expressed mainly in club cells of the bronchiolar epithelium and, at low levels, in type II alveolar cells.

Its subcellular location is the cytoplasm. The protein localises to the cytosol. It localises to the nucleus. The enzyme catalyses RX + glutathione = an S-substituted glutathione + a halide anion + H(+). Functionally, catalyzes the inactivation of reactive sulfate esters in carcinogenic arylmethanols. Highest activity towards ethacrynic acid and cumene hydroperoxide. This is Glutathione S-transferase theta-2 (Gstt2) from Rattus norvegicus (Rat).